Reading from the N-terminus, the 257-residue chain is Non-homologous end joining protein Ku (257 aa).

The region spanning 9-184 (TFGMVAIPIG…YTKPEVNEQE (176 aa)) is the Ku domain.

This sequence belongs to the prokaryotic Ku family. In terms of assembly, homodimer. Interacts with LigD.

Its function is as follows. With LigD forms a non-homologous end joining (NHEJ) DNA repair enzyme, which repairs dsDNA breaks with reduced fidelity. Binds linear dsDNA with 5'- and 3'- overhangs but not closed circular dsDNA nor ssDNA. Recruits and stimulates the ligase activity of LigD. The sequence is that of Non-homologous end joining protein Ku from Lachnoclostridium phytofermentans (strain ATCC 700394 / DSM 18823 / ISDg) (Clostridium phytofermentans).